We begin with the raw amino-acid sequence, 615 residues long: Fibrinogen alpha chain (615 aa).

Residues 1–19 (MFSVRDLCLVLSLVGAIKT) form the signal peptide. Residues 71-602 (CRMKGLIDEV…GHTKARPARG (532 aa)) are a coiled coil. The disordered stretch occupies residues 267 to 427 (FGGDGHARGD…TKQEFHTGKL (161 aa)). Over residues 293–302 (GTSSIGNVNP) the composition is skewed to polar residues. O-linked (GalNAc...) threonine glycosylation occurs at threonine 325. The segment covering 373–396 (GSAGTWNTGSSGSSSFRPDSSGHG) has biased composition (low complexity). Cysteine 455 and cysteine 485 are disulfide-bonded. Residues 530-615 (EFAALGESGS…SPLGEPSLTP (86 aa)) are disordered. Residues 537–549 (SGSSSSKTSTHSK) are compositionally biased toward low complexity. A compositionally biased stretch (polar residues) spans 550-560 (QFVSSSTTVNR). Positions 591-601 (QKGHTKARPAR) are enriched in basic residues.

In terms of assembly, heterohexamer; disulfide linked. Contains 2 sets of 3 non-identical chains (alpha, beta and gamma). The 2 heterotrimers are in head to head conformation with the N-termini in a small central domain. In terms of processing, conversion of fibrinogen to fibrin is triggered by thrombin, which cleaves fibrinopeptides A and B from alpha and beta chains, and thus exposes the N-terminal polymerization sites responsible for the formation of the soft clot. The soft clot is converted into the hard clot by factor XIIIA which catalyzes the epsilon-(gamma-glutamyl)lysine cross-linking between gamma chains (stronger) and between alpha chains (weaker) of different monomers. Post-translationally, forms F13A-mediated cross-links between a glutamine and the epsilon-amino group of a lysine residue, forming fibronectin-fibrinogen heteropolymers.

The protein resides in the secreted. Functionally, cleaved by the protease thrombin to yield monomers which, together with fibrinogen beta (FGB) and fibrinogen gamma (FGG), polymerize to form an insoluble fibrin matrix. Fibrin has a major function in hemostasis as one of the primary components of blood clots. In addition, functions during the early stages of wound repair to stabilize the lesion and guide cell migration during re-epithelialization. Was originally thought to be essential for platelet aggregation, based on in vitro studies using anticoagulated blood. However, subsequent studies have shown that it is not absolutely required for thrombus formation in vivo. Enhances expression of SELP in activated platelets via an ITGB3-dependent pathway. Maternal fibrinogen is essential for successful pregnancy. Fibrin deposition is also associated with infection, where it protects against IFNG-mediated hemorrhage. May also facilitate the immune response via both innate and T-cell mediated pathways. In Bos taurus (Bovine), this protein is Fibrinogen alpha chain (FGA).